A 292-amino-acid chain; its full sequence is uncharacterized protein (292 aa).

An HTH lysR-type domain is found at M1–T59. The H-T-H motif DNA-binding region spans F18 to S37.

This sequence belongs to the LysR transcriptional regulatory family.

This is an uncharacterized protein from Bacillus subtilis (strain 168).